The sequence spans 917 residues: Hexokinase-2 (917 aa).

Met-1 is subject to N-acetylmethionine. The interval 1 to 16 is mitochondrial-binding peptide (MBP); the sequence is MIASHMIACLFTELNQ. 2 consecutive Hexokinase domains span residues 16–458 and 464–906; these read QNQV…MVTA and ADQH…LITA. ATP is bound by residues Arg-30 and 84–89; that span reads DLGGTN. The interval 73-207 is hexokinase small subdomain 1; the sequence is DGTEHGEFLA…DFDIDIVAVV (135 aa). Position 84-88 (84-88) interacts with D-glucose 6-phosphate; the sequence is DLGGT. D-glucose is bound by residues 155 to 156, 172 to 173, and 208 to 209; these read SF, TK, and ND. Residues 208-447 form a hexokinase large subdomain 1 region; the sequence is NDTVGTMMTC…CDVRFLRSED (240 aa). The D-glucose 6-phosphate site is built by Asp-209 and Thr-232. D-glucose contacts are provided by residues Asn-235, Glu-260, and 291 to 294; that span reads QLFE. D-glucose 6-phosphate is bound at residue 413–415; it reads DGS. An ATP-binding site is contributed by 425–426; it reads KR. D-glucose 6-phosphate contacts are provided by residues Ser-449 and 532-536; that span reads DLGGT. The segment at 521–655 is hexokinase small subdomain 2; the sequence is DGTEKGDFLA…EFDLDVVAVV (135 aa). ATP is bound at residue 532–537; the sequence is DLGGTN. D-glucose contacts are provided by residues 603–604, 620–621, and 656–657; these read SF, TK, and ND. The interval 656–895 is hexokinase large subdomain 2; it reads NDTVGTMMTC…CDVSFLESED (240 aa). D-glucose 6-phosphate-binding residues include Asp-657 and Thr-680. Thr-680 lines the ATP pocket. Residues 682–683, Glu-708, and 739–742 each bind D-glucose; these read SN and QRFE. Residues 747–748, 784–788, and 863–867 each bind ATP; these read GM, TKFLS, and TLYKL. D-glucose 6-phosphate contacts are provided by residues 861–863 and Ser-897; that span reads DGT.

This sequence belongs to the hexokinase family. As to quaternary structure, monomer. Interacts with TIGAR; the interaction increases hexokinase activity in a hypoxia- and HIF1A-dependent manner.

It is found in the mitochondrion outer membrane. Its subcellular location is the cytoplasm. The protein localises to the cytosol. The enzyme catalyses a D-hexose + ATP = a D-hexose 6-phosphate + ADP + H(+). The catalysed reaction is D-fructose + ATP = D-fructose 6-phosphate + ADP + H(+). It catalyses the reaction D-glucose + ATP = D-glucose 6-phosphate + ADP + H(+). It functions in the pathway carbohydrate metabolism; hexose metabolism. It participates in carbohydrate degradation; glycolysis; D-glyceraldehyde 3-phosphate and glycerone phosphate from D-glucose: step 1/4. With respect to regulation, hexokinase activity is specifically inhibited by 2,6-disubstituted glucosamines. Functionally, catalyzes the phosphorylation of hexose, such as D-glucose and D-fructose, to hexose 6-phosphate (D-glucose 6-phosphate and D-fructose 6-phosphate, respectively). Mediates the initial step of glycolysis by catalyzing phosphorylation of D-glucose to D-glucose 6-phosphate. Plays a key role in maintaining the integrity of the outer mitochondrial membrane by preventing the release of apoptogenic molecules from the intermembrane space and subsequent apoptosis. The protein is Hexokinase-2 of Rattus norvegicus (Rat).